Here is a 284-residue protein sequence, read N- to C-terminus: Tropomyosin isoforms a/b/d/f (284 aa).

Positions 1-284 (MDAIKKKMQA…DSTFQELSGY (284 aa)) form a coiled coil. The tract at residues 40 to 78 (EEELRDTQKKMTQTGDDLDKAQEDLSAATSKLEEKEKTV) is disordered.

Belongs to the tropomyosin family. Isoform a and isoform d are expressed in body wall muscles, vulva, anus muscles and male tail muscles. Located to the myofibrils of thin actin filaments.

The protein resides in the cytoplasm. It is found in the myofibril. It localises to the sarcomere. Its subcellular location is the i band. In terms of biological role, tropomyosin, in association with the troponin complex, plays a central role in the calcium dependent regulation of muscle contraction. Involved in muscle actin filament organization and muscle arm extension and morphology. Protects actin filaments from depolymerization by unc-60 in vitro. Also has a role in male mating behavior by regulating the copulatory spicules. Binds to F-actin. In Caenorhabditis elegans, this protein is Tropomyosin isoforms a/b/d/f (lev-11).